The sequence spans 226 residues: 2,3-bisphosphoglycerate-dependent phosphoglycerate mutase (226 aa).

Substrate-binding positions include 8 to 15, 21 to 22, Arg58, 109 to 112, Lys120, 136 to 137, and 180 to 181; these read RHGQSVWN, TG, ERMY, RR, and GN. His9 acts as the Tele-phosphohistidine intermediate in catalysis. The active-site Proton donor/acceptor is Glu109.

The protein belongs to the phosphoglycerate mutase family. BPG-dependent PGAM subfamily.

The enzyme catalyses (2R)-2-phosphoglycerate = (2R)-3-phosphoglycerate. It participates in carbohydrate degradation; glycolysis; pyruvate from D-glyceraldehyde 3-phosphate: step 3/5. Catalyzes the interconversion of 2-phosphoglycerate and 3-phosphoglycerate. In Chlamydia trachomatis serovar L2 (strain ATCC VR-902B / DSM 19102 / 434/Bu), this protein is 2,3-bisphosphoglycerate-dependent phosphoglycerate mutase.